A 214-amino-acid chain; its full sequence is Calcineurin B homologous protein 3 (214 aa).

Gly2 is lipidated: N-myristoyl glycine. An EF-hand domain is found at 110-145 (CRTDKLRFLFNMYDSDNDNKITLEEYRKVVEELLSG). The Ca(2+) site is built by Asp123, Asp125, Asp127, Lys129, and Glu134.

The protein belongs to the calcineurin regulatory subunit family. CHP subfamily. As to quaternary structure, monomer. Homodimer.

Its subcellular location is the nucleus. The protein localises to the cytoplasm. It is found in the membrane. The protein resides in the cell membrane. It localises to the cell projection. Its subcellular location is the lamellipodium. The protein localises to the ruffle membrane. Its function is as follows. Functions as an integral cofactor in cell pH regulation by controlling plasma membrane-type Na(+)/H(+) exchange activity. Promotes the induction of hematopoietic stem cell differentiation toward megakaryocytic lineage. Essential for the coupling of ERK cascade activation with the expression of ETS family genes in megakaryocytic differentiation. Also involved in granulocytic differentiation in a ERK-dependent manner. Inhibits the phosphatase activity of calcineurin. This Xenopus laevis (African clawed frog) protein is Calcineurin B homologous protein 3.